Consider the following 182-residue polypeptide: Transmembrane protein 11 homolog, mitochondrial (182 aa).

Phosphoserine is present on serine 25. The next 2 membrane-spanning stretches (helical) occupy residues 70-89 (TAVA…RDRP) and 91-108 (IAAP…LYTV).

Belongs to the TMEM11 family.

Its subcellular location is the mitochondrion inner membrane. In terms of biological role, plays a role in mitochondrial morphogenesis. This is Transmembrane protein 11 homolog, mitochondrial (Pmi) from Drosophila melanogaster (Fruit fly).